A 175-amino-acid polypeptide reads, in one-letter code: Peptide deformylase (175 aa).

Residues Cys-96 and His-138 each contribute to the Fe cation site. Residue Glu-139 is part of the active site. Residue His-142 coordinates Fe cation.

The protein belongs to the polypeptide deformylase family. It depends on Fe(2+) as a cofactor.

The catalysed reaction is N-terminal N-formyl-L-methionyl-[peptide] + H2O = N-terminal L-methionyl-[peptide] + formate. In terms of biological role, removes the formyl group from the N-terminal Met of newly synthesized proteins. Requires at least a dipeptide for an efficient rate of reaction. N-terminal L-methionine is a prerequisite for activity but the enzyme has broad specificity at other positions. In Helicobacter acinonychis (strain Sheeba), this protein is Peptide deformylase.